The sequence spans 369 residues: Dual specificity protein phosphatase 1-B (369 aa).

The region spanning Arg21 to Asn138 is the Rhodanese domain. At Thr168 the chain carries Phosphothreonine; by MAPK1. Residues Gly175–Ala316 enclose the Tyrosine-protein phosphatase domain. Cys260 (phosphocysteine intermediate) is an active-site residue.

It belongs to the protein-tyrosine phosphatase family. Non-receptor class dual specificity subfamily. Post-translationally, phosphorylated by MAPK1/ERK2 at Thr-168 and at one or more serine residues in a progesterone-dependent manner. Phosphorylation reduces its rate of degradation but does not seem to affect phosphatase activity.

The protein localises to the nucleus. The enzyme catalyses O-phospho-L-seryl-[protein] + H2O = L-seryl-[protein] + phosphate. It catalyses the reaction O-phospho-L-threonyl-[protein] + H2O = L-threonyl-[protein] + phosphate. It carries out the reaction O-phospho-L-tyrosyl-[protein] + H2O = L-tyrosyl-[protein] + phosphate. Dual specificity phosphatase that dephosphorylates MAP kinase MAPK1/ERK2 on both 'Thr-188' and 'Tyr-190', regulating its activity during the meiotic cell cycle. The polypeptide is Dual specificity protein phosphatase 1-B (Xenopus laevis (African clawed frog)).